Consider the following 496-residue polypeptide: Probable malate:quinone oxidoreductase (496 aa).

It belongs to the MQO family. The cofactor is FAD.

It catalyses the reaction (S)-malate + a quinone = a quinol + oxaloacetate. It participates in carbohydrate metabolism; tricarboxylic acid cycle; oxaloacetate from (S)-malate (quinone route): step 1/1. This Prochlorococcus marinus (strain NATL2A) protein is Probable malate:quinone oxidoreductase.